We begin with the raw amino-acid sequence, 134 residues long: Large ribosomal subunit protein eL14 (134 aa).

Belongs to the eukaryotic ribosomal protein eL14 family. Component of the large ribosomal subunit (LSU). Mature yeast ribosomes consist of a small (40S) and a large (60S) subunit. The 40S small subunit contains 1 molecule of ribosomal RNA (18S rRNA) and at least 33 different proteins. The large 60S subunit contains 3 rRNA molecules (25S, 5.8S and 5S rRNA) and at least 46 different proteins.

The protein resides in the cytoplasm. It localises to the nucleus. Component of the ribosome, a large ribonucleoprotein complex responsible for the synthesis of proteins in the cell. The small ribosomal subunit (SSU) binds messenger RNAs (mRNAs) and translates the encoded message by selecting cognate aminoacyl-transfer RNA (tRNA) molecules. The large subunit (LSU) contains the ribosomal catalytic site termed the peptidyl transferase center (PTC), which catalyzes the formation of peptide bonds, thereby polymerizing the amino acids delivered by tRNAs into a polypeptide chain. The nascent polypeptides leave the ribosome through a tunnel in the LSU and interact with protein factors that function in enzymatic processing, targeting, and the membrane insertion of nascent chains at the exit of the ribosomal tunnel. The protein is Large ribosomal subunit protein eL14 (rpl14) of Schizosaccharomyces pombe (strain 972 / ATCC 24843) (Fission yeast).